A 271-amino-acid chain; its full sequence is Serine protease SP24D (271 aa).

The signal sequence occupies residues 1 to 22 (MTLADRVPLALAALAYLALVSG). Residues 23–49 (VRFHLSEQNDVLPGGSQARRPFFQGAR) constitute a propeptide, activation peptide. In terms of domain architecture, Peptidase S1 spans 50–269 (IVGGSVASEG…FVTWIQTTMR (220 aa)). Cys75 and Cys91 are disulfide-bonded. Catalysis depends on charge relay system residues His90 and Asp136. 2 disulfide bridges follow: Cys199–Cys211 and Cys221–Cys246. Ser225 functions as the Charge relay system in the catalytic mechanism.

Belongs to the peptidase S1 family. In terms of tissue distribution, highest level of adult expression is in the thorax.

In Anopheles gambiae (African malaria mosquito), this protein is Serine protease SP24D (Sp24D).